We begin with the raw amino-acid sequence, 395 residues long: Guanine nucleotide-binding protein subunit beta-5 (395 aa).

WD repeat units lie at residues 103–142 (GHGNKVLCMDWCKDKRRIVSSSQDGKVIVWDSFTTNKEHA), 145–184 (MPCTWVMACAYAPSGCAIACGGLDNKCSVYPLTFDKNENM), 193–234 (MHTN…QSFH), 236–278 (HGAD…QAFE), 279–318 (THESDVNSVRYYPSGDAFASGSDDATCRLYDLRADREVAI), 320–362 (SKES…RVSI), and 365–394 (GHENRVSTLRVSPDGTAFCSGSWDHTLRVW).

Belongs to the WD repeat G protein beta family. Component of a complex composed of RGS9 (isoform RGS9-1), GNB5 and RGS9BP; within this complex, the presence of GNB5 stabilizes both itself and RGS9 and increases RGS9 GTPase-activating protein (GAP) activity. Interacts with RGS7, forming the RGS7-GNB5 complex; within this complex, the presence of GNB5 increases RGS7 GTPase-activating protein (GAP) activity. Interacts with GPR158; promotes the GTPase activator activity of the RGS7-GNB5 complex in absence of glycine, in contrast GTPase activator activity of the RGS7-GNB5 complex is inhibited in presence of glycine. Interacts with RGS6. Isoform 1 is only detected in retina. Isoform 2 is detected in brain (at protein level). Isoform 2 is detected in brain.

Its subcellular location is the membrane. Functionally, enhances GTPase-activating protein (GAP) activity of regulator of G protein signaling (RGS) proteins, such as RGS7 and RGS9, hence involved in the termination of the signaling initiated by the G protein coupled receptors (GPCRs) by accelerating the GTP hydrolysis on the G-alpha subunits, thereby promoting their inactivation. Increases RGS7 GTPase-activating protein (GAP) activity, thereby regulating mood and cognition. Increases RGS9 GTPase-activating protein (GAP) activity, hence contributes to the deactivation of G protein signaling initiated by D(2) dopamine receptors. May play an important role in neuronal signaling, including in the parasympathetic, but not sympathetic, control of heart rate. This chain is Guanine nucleotide-binding protein subunit beta-5 (Gnb5), found in Mus musculus (Mouse).